The primary structure comprises 230 residues: MSAVSTQKDTEKKANLVLPVKEAGGKSNGTVELPAEIFDVTANIALMHQVVTAQLAAARQGTHATKTRGEVSGGGKKPYRQKGTGRARQGSTRAPQFTGGGTVHGPQPRDYSQRTPKKMIRAALHGALSDRARNDRIHVVSELVAGQTPSTKTAKNFLAELSDRKKFLVVVGREDVTAWKSVANLQNVQPIAPDQLNTYDVLNSDDVVFSVEALNAFVHGPTEAAQEESK.

Residues 59–113 (RQGTHATKTRGEVSGGGKKPYRQKGTGRARQGSTRAPQFTGGGTVHGPQPRDYSQ) are disordered.

This sequence belongs to the universal ribosomal protein uL4 family. As to quaternary structure, part of the 50S ribosomal subunit.

Its function is as follows. One of the primary rRNA binding proteins, this protein initially binds near the 5'-end of the 23S rRNA. It is important during the early stages of 50S assembly. It makes multiple contacts with different domains of the 23S rRNA in the assembled 50S subunit and ribosome. Functionally, forms part of the polypeptide exit tunnel. The chain is Large ribosomal subunit protein uL4 from Nocardia farcinica (strain IFM 10152).